The following is a 162-amino-acid chain: NADH-quinone oxidoreductase subunit I 1 (162 aa).

4Fe-4S ferredoxin-type domains are found at residues 52 to 82 (LRRYPNGEERCIACKLCEAVCPAQAITIEAG) and 93 to 122 (VRYDIDMVKCIYCGFCQEACPVDAIVEGPN). [4Fe-4S] cluster contacts are provided by cysteine 62, cysteine 65, cysteine 68, cysteine 72, cysteine 102, cysteine 105, cysteine 108, and cysteine 112.

It belongs to the complex I 23 kDa subunit family. As to quaternary structure, NDH-1 is composed of 14 different subunits. Subunits NuoA, H, J, K, L, M, N constitute the membrane sector of the complex. It depends on [4Fe-4S] cluster as a cofactor.

Its subcellular location is the cell inner membrane. The catalysed reaction is a quinone + NADH + 5 H(+)(in) = a quinol + NAD(+) + 4 H(+)(out). Its function is as follows. NDH-1 shuttles electrons from NADH, via FMN and iron-sulfur (Fe-S) centers, to quinones in the respiratory chain. The immediate electron acceptor for the enzyme in this species is believed to be ubiquinone. Couples the redox reaction to proton translocation (for every two electrons transferred, four hydrogen ions are translocated across the cytoplasmic membrane), and thus conserves the redox energy in a proton gradient. This chain is NADH-quinone oxidoreductase subunit I 1, found in Rhodopseudomonas palustris (strain ATCC BAA-98 / CGA009).